Consider the following 90-residue polypeptide: MARVTVQDAVEKVGNRFDLVLIAARRARQMQTGGKDSLVPEENDKPTVIALREIEEGLITKEVLDARERQEQQEQEAAELAAVSSIARNR.

The tract at residues Arg-69–Arg-90 is disordered.

This sequence belongs to the RNA polymerase subunit omega family. As to quaternary structure, the RNAP catalytic core consists of 2 alpha, 1 beta, 1 beta' and 1 omega subunit. When a sigma factor is associated with the core the holoenzyme is formed, which can initiate transcription.

It carries out the reaction RNA(n) + a ribonucleoside 5'-triphosphate = RNA(n+1) + diphosphate. Promotes RNA polymerase assembly. Latches the N- and C-terminal regions of the beta' subunit thereby facilitating its interaction with the beta and alpha subunits. The protein is DNA-directed RNA polymerase subunit omega of Vibrio vulnificus (strain CMCP6).